We begin with the raw amino-acid sequence, 136 residues long: Small ribosomal subunit protein bS6 (136 aa).

The interval 96-136 (VTEPSALARSGSDAEADRAPADEGSVEAAGAEPGSEAEAEA) is disordered.

Belongs to the bacterial ribosomal protein bS6 family.

Functionally, binds together with bS18 to 16S ribosomal RNA. This chain is Small ribosomal subunit protein bS6, found in Methylococcus capsulatus (strain ATCC 33009 / NCIMB 11132 / Bath).